The chain runs to 378 residues: Probable tRNA sulfurtransferase (378 aa).

In terms of domain architecture, THUMP spans 51–153; that stretch reads DANLEKLQYV…SDKTYLFSKT (103 aa). ATP is bound by residues 171 to 172, 196 to 197, Arg-253, Gly-275, and Gln-284; these read LM and SF.

It belongs to the ThiI family.

It localises to the cytoplasm. It carries out the reaction [ThiI sulfur-carrier protein]-S-sulfanyl-L-cysteine + a uridine in tRNA + 2 reduced [2Fe-2S]-[ferredoxin] + ATP + H(+) = [ThiI sulfur-carrier protein]-L-cysteine + a 4-thiouridine in tRNA + 2 oxidized [2Fe-2S]-[ferredoxin] + AMP + diphosphate. The catalysed reaction is [ThiS sulfur-carrier protein]-C-terminal Gly-Gly-AMP + S-sulfanyl-L-cysteinyl-[cysteine desulfurase] + AH2 = [ThiS sulfur-carrier protein]-C-terminal-Gly-aminoethanethioate + L-cysteinyl-[cysteine desulfurase] + A + AMP + 2 H(+). It participates in cofactor biosynthesis; thiamine diphosphate biosynthesis. Functionally, catalyzes the ATP-dependent transfer of a sulfur to tRNA to produce 4-thiouridine in position 8 of tRNAs, which functions as a near-UV photosensor. Also catalyzes the transfer of sulfur to the sulfur carrier protein ThiS, forming ThiS-thiocarboxylate. This is a step in the synthesis of thiazole, in the thiamine biosynthesis pathway. The sulfur is donated as persulfide by IscS. The chain is Probable tRNA sulfurtransferase from Mycoplasmopsis agalactiae (strain NCTC 10123 / CIP 59.7 / PG2) (Mycoplasma agalactiae).